The sequence spans 375 residues: Chaperone protein DnaJ (375 aa).

The 66-residue stretch at 5–70 (DYYEILGVSK…QKRAAYDQYG (66 aa)) folds into the J domain. Residues 130 to 208 (GVTKEIRIPT…CHGHGRVEKS (79 aa)) form a CR-type zinc finger. Zn(2+) is bound by residues Cys-143, Cys-146, Cys-160, Cys-163, Cys-182, Cys-185, Cys-196, and Cys-199. CXXCXGXG motif repeat units follow at residues 143-150 (CDVCHGSG), 160-167 (CPTCHGSG), 182-189 (CPHCQGRG), and 196-203 (CHKCHGHG).

This sequence belongs to the DnaJ family. As to quaternary structure, homodimer. The cofactor is Zn(2+).

Its subcellular location is the cytoplasm. In terms of biological role, participates actively in the response to hyperosmotic and heat shock by preventing the aggregation of stress-denatured proteins and by disaggregating proteins, also in an autonomous, DnaK-independent fashion. Unfolded proteins bind initially to DnaJ; upon interaction with the DnaJ-bound protein, DnaK hydrolyzes its bound ATP, resulting in the formation of a stable complex. GrpE releases ADP from DnaK; ATP binding to DnaK triggers the release of the substrate protein, thus completing the reaction cycle. Several rounds of ATP-dependent interactions between DnaJ, DnaK and GrpE are required for fully efficient folding. Also involved, together with DnaK and GrpE, in the DNA replication of plasmids through activation of initiation proteins. This is Chaperone protein DnaJ from Salmonella paratyphi A (strain ATCC 9150 / SARB42).